Consider the following 278-residue polypeptide: 1-acyl-sn-glycerol-3-phosphate acyltransferase beta (278 aa).

Positions 1-23 (MELWPCLAAALLLLLLLVQLSRA) are cleaved as a signal peptide. At 24-29 (AEFYAK) the chain is on the lumenal side. A helical transmembrane segment spans residues 30 to 50 (VALYCALCFTVSAVASLVCLL). Residues 51–121 (RHGGRTVENM…PERCVQIAKR (71 aa)) are Cytoplasmic-facing. Residues 98 to 103 (HQSILD) carry the HXXXXD motif motif. Residues 122–142 (ELLFLGPVGLIMYLGGVFFIN) form a helical membrane-spanning segment. The Lumenal portion of the chain corresponds to 143-278 (RQRSSTAMTV…TAGSGVQPAQ (136 aa)). Residues 172–175 (EGTR) carry the EGTR motif motif.

It belongs to the 1-acyl-sn-glycerol-3-phosphate acyltransferase family. Expressed predominantly in adipose tissue, pancreas and liver.

The protein resides in the endoplasmic reticulum membrane. The enzyme catalyses a 1-acyl-sn-glycero-3-phosphate + an acyl-CoA = a 1,2-diacyl-sn-glycero-3-phosphate + CoA. It catalyses the reaction 1-(9Z-octadecenoyl)-sn-glycero-3-phosphate + (9Z)-octadecenoyl-CoA = 1,2-di-(9Z-octadecenoyl)-sn-glycero-3-phosphate + CoA. It carries out the reaction 1-(9Z-octadecenoyl)-sn-glycero-3-phosphate + hexadecanoyl-CoA = 1-(9Z)-octadecenoyl-2-hexadecanoyl-sn-glycero-3-phosphate + CoA. The catalysed reaction is heptadecanoyl-CoA + 1-(9Z-octadecenoyl)-sn-glycero-3-phosphate = 1-(9Z)-octadecenoyl-2-heptadecanoyl-sn-glycero-3-phosphate + CoA. The enzyme catalyses 1-(9Z-octadecenoyl)-sn-glycero-3-phosphate + (9Z,12Z)-octadecadienoyl-CoA = 1-(9Z)-octadecenoyl-2-(9Z,12Z)-octadecadienoyl-sn-glycero-3-phosphate + CoA. It catalyses the reaction 1-(9Z-octadecenoyl)-sn-glycero-3-phosphate + tetradecanoyl-CoA = 1-(9Z)-octadecenoyl-2-tetradecanoyl-sn-glycero-3-phosphate + CoA. It carries out the reaction pentadecanoyl-CoA + 1-(9Z-octadecenoyl)-sn-glycero-3-phosphate = 1-(9Z)-octadecenoyl-2-pentadecanoyl-sn-glycero-3-phosphate + CoA. The catalysed reaction is 1-hexadecanoyl-sn-glycero-3-phosphate + (9Z)-octadecenoyl-CoA = 1-hexadecanoyl-2-(9Z-octadecenoyl)-sn-glycero-3-phosphate + CoA. The enzyme catalyses 1-tetradecanoyl-sn-glycerol 3-phosphate + (9Z)-octadecenoyl-CoA = 1-tetradecanoyl-2-(9Z)-octadecenoyl-sn-glycero-3-phosphate + CoA. It catalyses the reaction 1-(9Z,12Z,15Z)-octadecatrienoyl-sn-glycero-3-phosphate + (9Z)-octadecenoyl-CoA = 1-(9Z,12Z,15Z)-octadecatrienoyl-2-(9Z)-octadecenoyl-sn-glycero-3-phosphate + CoA. It carries out the reaction 1-(6Z,9Z,12Z-octadecatrienoyl)-sn-glycero-3-phosphate + (9Z)-octadecenoyl-CoA = (6Z,9Z,12Z)-octadecatrienoyl-2-(9Z)-octadecenoyl-sn-glycero-3-phosphate + CoA. The catalysed reaction is 1-eicosanoyl-sn-glycero-3-phosphate + (9Z)-octadecenoyl-CoA = 1-eicosanoyl-2-(9Z)-octadecenoyl-sn-glycero-3-phosphate + CoA. The enzyme catalyses 1-hexadecanoyl-sn-glycero-3-phosphate + octadecanoyl-CoA = 1-hexadecanoyl-2-octadecanoyl-sn-glycero-3-phosphate + CoA. It catalyses the reaction 1-hexadecanoyl-sn-glycero-3-phosphate + (5Z,8Z,11Z,14Z)-eicosatetraenoyl-CoA = 1-hexadecanoyl-2-(5Z,8Z,11Z,14Z-eicosatetraenoyl)-sn-glycero-3-phosphate + CoA. It carries out the reaction 1-hexadecanoyl-sn-glycero-3-phosphate + hexadecanoyl-CoA = 1,2-dihexadecanoyl-sn-glycero-3-phosphate + CoA. The catalysed reaction is 1-hexadecanoyl-sn-glycero-3-phosphate + tetradecanoyl-CoA = 1-hexadecanoyl-2-tetradecanoyl-sn-glycero-3-phosphate + CoA. The enzyme catalyses (11Z)-octadecenoyl-CoA + 1-(9Z-octadecenoyl)-sn-glycero-3-phosphate = 1-(9Z)-octadecenoyl-2-(11Z)-octadecenoyl-sn-glycero-3-phosphate + CoA. The protein operates within phospholipid metabolism; CDP-diacylglycerol biosynthesis; CDP-diacylglycerol from sn-glycerol 3-phosphate: step 2/3. Its function is as follows. Converts 1-acyl-sn-glycerol-3-phosphate (lysophosphatidic acid or LPA) into 1,2-diacyl-sn-glycerol-3-phosphate (phosphatidic acid or PA) by incorporating an acyl moiety at the sn-2 position of the glycerol backbone. The sequence is that of 1-acyl-sn-glycerol-3-phosphate acyltransferase beta (AGPAT2) from Homo sapiens (Human).